The primary structure comprises 226 residues: MAGTGLVAGEVVVDALPYFDQGYEAPGVREAAAALVEEETRRYRPTKNYLSYLTAPDYSAFETDIMRNEFERLAARQPIELLSMKRYELPAPPSGQKKNDITAWQECVNNSMAQLEHQAVRIENLELMSQHGCNAWKVYNENLVHMIEHAQKELQKLRKHIQDLNWQRKNMQLTAGSKLREMESNWVSLVSKNYEIERTIVQLENEIYQIKQQHGEANKENIRQDF.

Ala-2 is subject to N-acetylalanine. The residue at position 94 (Ser-94) is a Phosphoserine. Residues 139 to 223 (YNENLVHMIE…HGEANKENIR (85 aa)) are a coiled coil.

Belongs to the SPF27 family. Component of the pre-catalytic and catalytic spliceosome complexes. Component of the postcatalytic spliceosome P complex. Component of the PRP19-CDC5L splicing complex composed of a core complex comprising a homotetramer of PRPF19, CDC5L, PLRG1 and BCAS2, and at least three less stably associated proteins CTNNBL1, CWC15 and HSPA8. Interacts directly in the complex with PRPF19, CDC5L and PLRG1.

It is found in the nucleus. The protein resides in the nucleolus. Functionally, required for pre-mRNA splicing as component of the activated spliceosome. Component of the PRP19-CDC5L complex that forms an integral part of the spliceosome and is required for activating pre-mRNA splicing. May have a scaffolding role in the spliceosome assembly as it contacts all other components of the core complex. The PRP19-CDC5L complex may also play a role in the response to DNA damage (DDR). The protein is Pre-mRNA-splicing factor SPF27 (BCAS2) of Pongo abelii (Sumatran orangutan).